We begin with the raw amino-acid sequence, 243 residues long: Carboxy-S-adenosyl-L-methionine synthase (243 aa).

S-adenosyl-L-methionine-binding positions include tyrosine 40, glycine 65–serine 67, aspartate 90–asparagine 91, aspartate 118–isoleucine 119, asparagine 133, and arginine 200.

This sequence belongs to the class I-like SAM-binding methyltransferase superfamily. Cx-SAM synthase family. Homodimer.

The catalysed reaction is prephenate + S-adenosyl-L-methionine = carboxy-S-adenosyl-L-methionine + 3-phenylpyruvate + H2O. Catalyzes the conversion of S-adenosyl-L-methionine (SAM) to carboxy-S-adenosyl-L-methionine (Cx-SAM). The sequence is that of Carboxy-S-adenosyl-L-methionine synthase from Shewanella denitrificans (strain OS217 / ATCC BAA-1090 / DSM 15013).